Consider the following 106-residue polypeptide: Glutaredoxin-1 (106 aa).

An N-acetylalanine modification is found at Ala-2. The 104-residue stretch at 3-106 (QAFVNSKIQP…TRLQQIGALK (104 aa)) folds into the Glutaredoxin domain. Position 9 is an N6-succinyllysine (Lys-9). 2 disulfide bridges follow: Cys-23–Cys-26 and Cys-79–Cys-83.

This sequence belongs to the glutaredoxin family.

Its subcellular location is the cytoplasm. In terms of biological role, has a glutathione-disulfide oxidoreductase activity in the presence of NADPH and glutathione reductase. Reduces low molecular weight disulfides and proteins. In Sus scrofa (Pig), this protein is Glutaredoxin-1 (GLRX).